We begin with the raw amino-acid sequence, 1914 residues long: Zinc finger protein Rlf (1914 aa).

Ser41 is modified (phosphoserine). The span at 521-540 shows a compositional bias: basic and acidic residues; it reads KQYRRRDLTDQHKEKRDKKP. Residues 521 to 541 are disordered; it reads KQYRRRDLTDQHKEKRDKKPI. The C2H2-type 1 zinc-finger motif lies at 582–604; sequence YTCPVCIKKFKRKEMFVPHVMEH. A Glycyl lysine isopeptide (Lys-Gly) (interchain with G-Cter in SUMO2) cross-link involves residue Lys622. Phosphoserine is present on residues Ser632 and Ser634. 5 C2H2-type zinc fingers span residues 671 to 696, 714 to 736, 742 to 766, 771 to 795, and 801 to 825; these read YPCPGTDCSRVFKQFKYLSVHLKAEH, EKCTYCRRHFMSAFHLREHEQVH, YMCVSIDCYARFGSVNELLNHKQKH, YKCELNGCNIVFSDLGQLYHHEAQH, and YTCNFLGCKKFYYSKIEYQNHLSMH. Residue Lys839 forms a Glycyl lysine isopeptide (Lys-Gly) (interchain with G-Cter in SUMO2) linkage. The disordered stretch occupies residues 882 to 907; it reads TETAENLKENSDSNSSDQLSHSSSAS. Residues 893-907 are compositionally biased toward low complexity; it reads DSNSSDQLSHSSSAS. The C2H2-type 7 zinc finger occupies 954 to 979; the sequence is FTCGFDGCGSTYKNARGMQKHLRKVH. Positions 993–1028 are disordered; sequence LFPSLGNEHNQTTEKLDAEPKPCSDTNSDSPDEGLD. A compositionally biased stretch (basic and acidic residues) spans 1003 to 1014; that stretch reads QTTEKLDAEPKP. C2H2-type zinc fingers lie at residues 1127-1152 and 1172-1195; these read FFCELQGCKYEFVTREALLMHYLKKH and FQCHICQRSFTRKTHLRIHYKNKH. Residues 1231-1290 are disordered; it reads LGGDPSSNSEKPHCHPKKDECSSETDLESSCEETESKTSDISSPIGSHREEQEGREGRGS. Positions 1240 to 1251 are enriched in basic and acidic residues; the sequence is EKPHCHPKKDEC. Positions 1252-1263 are enriched in acidic residues; the sequence is SSETDLESSCEE. Over residues 1277-1289 the composition is skewed to basic and acidic residues; that stretch reads SHREEQEGREGRG. 5 C2H2-type zinc fingers span residues 1310–1335, 1362–1387, 1407–1432, 1444–1469, and 1549–1574; these read FHCIHKTCNSSFTNLKGLIRHYRTVH, FACKYKECNKRFLCSKALAKHCSDSH, FSCNQPQCPAVFYTFNKLKHHLMEQH, IHCDLNGCGQIFTHRSNYSQHVYYRH, and YPCMVQGCLSVVKLESSIVRHYKRTH. Lys1423 participates in a covalent cross-link: Glycyl lysine isopeptide (Lys-Gly) (interchain with G-Cter in SUMO2). Residues Lys1599 and Lys1611 each participate in a glycyl lysine isopeptide (Lys-Gly) (interchain with G-Cter in SUMO2) cross-link. The disordered stretch occupies residues 1620–1654; that stretch reads SERTEHSHSPGDSSAPIQNTDCCHSSERDGGQKGC. Over residues 1629–1642 the composition is skewed to polar residues; sequence PGDSSAPIQNTDCC. A Glycyl lysine isopeptide (Lys-Gly) (interchain with G-Cter in SUMO2) cross-link involves residue Lys1696. The disordered stretch occupies residues 1725–1757; the sequence is ESETRQHSSGQENTVKNPTHVPKENFRKHSQPR. The segment covering 1731–1741 has biased composition (polar residues); that stretch reads HSSGQENTVKN. Residue Lys1762 forms a Glycyl lysine isopeptide (Lys-Gly) (interchain with G-Cter in SUMO2) linkage. The segment at 1783-1807 is disordered; sequence KEDDFDDWEPSEHLTLSNSSQSSND. Residues 1796–1807 are compositionally biased toward polar residues; sequence LTLSNSSQSSND.

It belongs to the krueppel C2H2-type zinc-finger protein family. Interacts with RIT1 and RIT2. In terms of tissue distribution, widely expressed in fetal and adult tissues.

Its subcellular location is the nucleus. May be involved in transcriptional regulation. This is Zinc finger protein Rlf (RLF) from Homo sapiens (Human).